We begin with the raw amino-acid sequence, 648 residues long: Copper methylamine oxidase (648 aa).

Residues 1–9 constitute a propeptide that is removed on maturation; the sequence is MTLNAESEA. Residue 299 to 310 participates in substrate binding; that stretch reads AFDSGEYNIGNM. D301 acts as the Proton acceptor in catalysis. C320 and C346 are joined by a disulfide. A substrate-binding site is contributed by 382–387; sequence VANYEY. Y385 functions as the Schiff-base intermediate with substrate; via topaquinone in the catalytic mechanism. Y385 is subject to 2',4',5'-topaquinone. Residues H436 and H438 each contribute to the Cu cation site. 3 residues coordinate Mn(2+): D445, F446, and D584. A Cu cation-binding site is contributed by H595. Residues 629–648 form a disordered region; that stretch reads PTSTSTTQTGEADTCCHTDK.

Belongs to the copper/topaquinone oxidase family. In terms of assembly, homodimer. Requires Cu cation as cofactor. It depends on Zn(2+) as a cofactor. The cofactor is L-topaquinone. Mn(2+) is required as a cofactor. Topaquinone (TPQ) is generated by copper-dependent autoxidation of a specific tyrosyl residue.

The catalysed reaction is a primary methyl amine + O2 + H2O = an aldehyde + H2O2 + NH4(+). The sequence is that of Copper methylamine oxidase (maoII) from Arthrobacter sp. (strain P1).